Here is a 526-residue protein sequence, read N- to C-terminus: Ferrochelatase-2, chloroplastic (526 aa).

The protein belongs to the ferrochelatase family.

It is found in the plastid. Its subcellular location is the chloroplast. It catalyses the reaction heme b + 2 H(+) = protoporphyrin IX + Fe(2+). It participates in porphyrin-containing compound metabolism; protoheme biosynthesis; protoheme from protoporphyrin-IX: step 1/1. Catalyzes the ferrous insertion into protoporphyrin IX. The protein is Ferrochelatase-2, chloroplastic of Oryza sativa subsp. japonica (Rice).